The following is a 414-amino-acid chain: Histidine--tRNA ligase (414 aa).

Belongs to the class-II aminoacyl-tRNA synthetase family. As to quaternary structure, homodimer.

Its subcellular location is the cytoplasm. The enzyme catalyses tRNA(His) + L-histidine + ATP = L-histidyl-tRNA(His) + AMP + diphosphate + H(+). The protein is Histidine--tRNA ligase of Endomicrobium trichonymphae.